Reading from the N-terminus, the 102-residue chain is Large ribosomal subunit protein bL21 (102 aa).

It belongs to the bacterial ribosomal protein bL21 family. Part of the 50S ribosomal subunit. Contacts protein L20.

Its function is as follows. This protein binds to 23S rRNA in the presence of protein L20. This is Large ribosomal subunit protein bL21 from Trichlorobacter lovleyi (strain ATCC BAA-1151 / DSM 17278 / SZ) (Geobacter lovleyi).